The sequence spans 105 residues: Large ribosomal subunit protein uL18c (105 aa).

The protein belongs to the universal ribosomal protein uL18 family. In terms of assembly, part of the 50S ribosomal subunit; contacts the 5S rRNA.

It localises to the plastid. The protein localises to the chloroplast. Its function is as follows. Binds 5S rRNA, forms part of the central protuberance of the 50S subunit. This Gracilaria tenuistipitata var. liui (Red alga) protein is Large ribosomal subunit protein uL18c (rpl18).